A 475-amino-acid polypeptide reads, in one-letter code: Aspartyl/glutamyl-tRNA(Asn/Gln) amidotransferase subunit B (475 aa).

Belongs to the GatB/GatE family. GatB subfamily. In terms of assembly, heterotrimer of A, B and C subunits.

The enzyme catalyses L-glutamyl-tRNA(Gln) + L-glutamine + ATP + H2O = L-glutaminyl-tRNA(Gln) + L-glutamate + ADP + phosphate + H(+). It catalyses the reaction L-aspartyl-tRNA(Asn) + L-glutamine + ATP + H2O = L-asparaginyl-tRNA(Asn) + L-glutamate + ADP + phosphate + 2 H(+). Its function is as follows. Allows the formation of correctly charged Asn-tRNA(Asn) or Gln-tRNA(Gln) through the transamidation of misacylated Asp-tRNA(Asn) or Glu-tRNA(Gln) in organisms which lack either or both of asparaginyl-tRNA or glutaminyl-tRNA synthetases. The reaction takes place in the presence of glutamine and ATP through an activated phospho-Asp-tRNA(Asn) or phospho-Glu-tRNA(Gln). This chain is Aspartyl/glutamyl-tRNA(Asn/Gln) amidotransferase subunit B, found in Chlorobium luteolum (strain DSM 273 / BCRC 81028 / 2530) (Pelodictyon luteolum).